The chain runs to 557 residues: Formate--tetrahydrofolate ligase (557 aa).

Residue 67 to 74 (TPAGEGKS) coordinates ATP.

Belongs to the formate--tetrahydrofolate ligase family.

The catalysed reaction is (6S)-5,6,7,8-tetrahydrofolate + formate + ATP = (6R)-10-formyltetrahydrofolate + ADP + phosphate. Its pathway is one-carbon metabolism; tetrahydrofolate interconversion. The polypeptide is Formate--tetrahydrofolate ligase (Lacticaseibacillus paracasei (strain ATCC 334 / BCRC 17002 / CCUG 31169 / CIP 107868 / KCTC 3260 / NRRL B-441) (Lactobacillus paracasei)).